Reading from the N-terminus, the 506-residue chain is Maturase K (506 aa).

It belongs to the intron maturase 2 family. MatK subfamily.

The protein resides in the plastid. The protein localises to the chloroplast. Its function is as follows. Usually encoded in the trnK tRNA gene intron. Probably assists in splicing its own and other chloroplast group II introns. This Gaultheria procumbens (Wintergreen) protein is Maturase K.